The primary structure comprises 436 residues: UPF0597 protein YhaM (436 aa).

The protein belongs to the UPF0597 family.

The chain is UPF0597 protein YhaM from Shigella flexneri serotype 5b (strain 8401).